We begin with the raw amino-acid sequence, 382 residues long: N-acetyldiaminopimelate deacetylase (382 aa).

The active site involves Asp-73. Glu-132 serves as the catalytic Proton acceptor.

Belongs to the peptidase M20A family. N-acetyldiaminopimelate deacetylase subfamily.

It carries out the reaction N-acetyl-(2S,6S)-2,6-diaminopimelate + H2O = (2S,6S)-2,6-diaminopimelate + acetate. Its pathway is amino-acid biosynthesis; L-lysine biosynthesis via DAP pathway; LL-2,6-diaminopimelate from (S)-tetrahydrodipicolinate (acetylase route): step 3/3. Functionally, catalyzes the conversion of N-acetyl-diaminopimelate to diaminopimelate and acetate. The protein is N-acetyldiaminopimelate deacetylase of Oenococcus oeni (strain ATCC BAA-331 / PSU-1).